Consider the following 136-residue polypeptide: MARVTVEDCIDKVENRFELVLLAGHRARLLSSGAPLTVDRDRDKNPVVALREIADQTITPDDLKEQLIHSLQKYVEVDEPEAEAVPLLSSSPAAAAVAPQSSGDDGDIQFDRMSEEDLLRGLENLAPPTETEDEGD.

The tract at residues 81–136 (EAEAVPLLSSSPAAAAVAPQSSGDDGDIQFDRMSEEDLLRGLENLAPPTETEDEGD) is disordered. The span at 83–99 (EAVPLLSSSPAAAAVAP) shows a compositional bias: low complexity. Positions 109 to 120 (QFDRMSEEDLLR) are enriched in basic and acidic residues.

It belongs to the RNA polymerase subunit omega family. In terms of assembly, the RNAP catalytic core consists of 2 alpha, 1 beta, 1 beta' and 1 omega subunit. When a sigma factor is associated with the core the holoenzyme is formed, which can initiate transcription.

The catalysed reaction is RNA(n) + a ribonucleoside 5'-triphosphate = RNA(n+1) + diphosphate. Its function is as follows. Promotes RNA polymerase assembly. Latches the N- and C-terminal regions of the beta' subunit thereby facilitating its interaction with the beta and alpha subunits. The chain is DNA-directed RNA polymerase subunit omega from Methylobacterium nodulans (strain LMG 21967 / CNCM I-2342 / ORS 2060).